The following is a 502-amino-acid chain: Lipoyl synthase, apicoplast (502 aa).

A signal peptide spans 1 to 16 (MNFLVLFFSYSIFVLP). The [4Fe-4S] cluster site is built by Cys-192, Cys-197, Cys-203, Cys-218, Cys-222, Cys-225, and Ser-433. Residues 204 to 422 (WNIGTATIML…KDVGLKMGFK (219 aa)) enclose the Radical SAM core domain.

It belongs to the radical SAM superfamily. Lipoyl synthase family. [4Fe-4S] cluster is required as a cofactor.

Its subcellular location is the plastid. The protein localises to the apicoplast. The enzyme catalyses [[Fe-S] cluster scaffold protein carrying a second [4Fe-4S](2+) cluster] + N(6)-octanoyl-L-lysyl-[protein] + 2 oxidized [2Fe-2S]-[ferredoxin] + 2 S-adenosyl-L-methionine + 4 H(+) = [[Fe-S] cluster scaffold protein] + N(6)-[(R)-dihydrolipoyl]-L-lysyl-[protein] + 4 Fe(3+) + 2 hydrogen sulfide + 2 5'-deoxyadenosine + 2 L-methionine + 2 reduced [2Fe-2S]-[ferredoxin]. The protein operates within protein modification; protein lipoylation via endogenous pathway; protein N(6)-(lipoyl)lysine from octanoyl-[acyl-carrier-protein]: step 2/2. Catalyzes the radical-mediated insertion of two sulfur atoms into the C-6 and C-8 positions of the octanoyl moiety bound to the lipoyl domains of lipoate-dependent enzymes, thereby converting the octanoylated domains into lipoylated derivatives. The polypeptide is Lipoyl synthase, apicoplast (Plasmodium yoelii yoelii).